The sequence spans 318 residues: tRNA U34 carboxymethyltransferase (318 aa).

Residues Lys-88, Trp-102, Lys-107, Gly-126, Met-192, Tyr-196, and Arg-311 each coordinate carboxy-S-adenosyl-L-methionine.

This sequence belongs to the class I-like SAM-binding methyltransferase superfamily. CmoB family. In terms of assembly, homotetramer.

It catalyses the reaction carboxy-S-adenosyl-L-methionine + 5-hydroxyuridine(34) in tRNA = 5-carboxymethoxyuridine(34) in tRNA + S-adenosyl-L-homocysteine + H(+). Catalyzes carboxymethyl transfer from carboxy-S-adenosyl-L-methionine (Cx-SAM) to 5-hydroxyuridine (ho5U) to form 5-carboxymethoxyuridine (cmo5U) at position 34 in tRNAs. The protein is tRNA U34 carboxymethyltransferase of Pseudomonas fluorescens (strain SBW25).